The chain runs to 151 residues: Transcriptional repressor NrdR (151 aa).

The segment at 3–34 (CPFCNAQDTKVIDSRLVSEGSQVRRRRSCNEC) is a zinc-finger region. The 91-residue stretch at 49–139 (PRLIKSDGRR…VYRSFKDVKE (91 aa)) folds into the ATP-cone domain.

This sequence belongs to the NrdR family. Zn(2+) serves as cofactor.

Functionally, negatively regulates transcription of bacterial ribonucleotide reductase nrd genes and operons by binding to NrdR-boxes. In Psychromonas ingrahamii (strain DSM 17664 / CCUG 51855 / 37), this protein is Transcriptional repressor NrdR.